The sequence spans 479 residues: Anaerobic nitric oxide reductase flavorubredoxin (479 aa).

The segment at 30-210 (LRGSSYNSYL…PFSRLVTPKI (181 aa)) is zinc metallo-hydrolase. The Fe cation site is built by His79, Glu81, Asp83, His147, Asp166, and His227. The 140-residue stretch at 254–393 (ITIFYDTMSN…LCREHGREIA (140 aa)) folds into the Flavodoxin-like domain. Residues 260-264 (TMSNN) and 342-369 (AFGSHGWSGGAVDRLSTRLQDAGFEMSL) each bind FMN. Residues 423–474 (GPRMQCSVCQWIYDPAKGEPMQDVAPGTPWSEVPDNFLCPECSLGKDVFDEL) enclose the Rubredoxin-like domain. Fe cation contacts are provided by Cys428, Cys431, Cys461, and Cys464.

It in the N-terminal section; belongs to the zinc metallo-hydrolase group 3 family. As to quaternary structure, homotetramer. The cofactor is Fe cation. It depends on FMN as a cofactor.

Its subcellular location is the cytoplasm. It functions in the pathway nitrogen metabolism; nitric oxide reduction. Its function is as follows. Anaerobic nitric oxide reductase; uses NADH to detoxify nitric oxide (NO), protecting several 4Fe-4S NO-sensitive enzymes. Has at least 2 reductase partners, only one of which (NorW, flavorubredoxin reductase) has been identified. NO probably binds to the di-iron center; electrons enter from the NorW at rubredoxin and are transferred sequentially to the FMN center and the di-iron center. Also able to function as an aerobic oxygen reductase. This is Anaerobic nitric oxide reductase flavorubredoxin from Escherichia coli (strain SMS-3-5 / SECEC).